Reading from the N-terminus, the 186-residue chain is Putative inactive recombination-promoting nuclease-like protein YjiQ (186 aa).

Belongs to the Rpn/YhgA-like nuclease family.

This pseudogene is the C-terminal fragment of low activity DNA endonuclease RpnD which probably yields 3'-hydroxyl ends. The intact protein can be seen in this entry (AC B7NGZ6). Expression of the repaired protein increases the frequency of recA-independent recombination, but also decreases viability probably via DNA damage; in a RecA strain expression has no effect on viability but does induce the SOS repair response. May play a role in horizontal gene transfer. The chain is Putative inactive recombination-promoting nuclease-like protein YjiQ (yjiQ) from Escherichia coli (strain K12).